We begin with the raw amino-acid sequence, 101 residues long: Urinary protein 2 (101 aa).

The signal sequence occupies residues 1–21; the sequence is MGKHILLLPLGLSLLMSSLLA. A UPAR/Ly6 domain is found at 22 to 99; that stretch reads LQCFRCTSFD…CSATPFCNMV (78 aa). 5 cysteine pairs are disulfide-bonded: cysteine 24–cysteine 51, cysteine 27–cysteine 36, cysteine 43–cysteine 70, cysteine 73–cysteine 89, and cysteine 90–cysteine 96. N-linked (GlcNAc...) asparagine glycans are attached at residues asparagine 67 and asparagine 74.

In terms of processing, N-glycosylated.

It localises to the secreted. This chain is Urinary protein 2, found in Rattus norvegicus (Rat).